The following is a 594-amino-acid chain: Kelch domain-containing protein 7B (594 aa).

The disordered stretch occupies residues 1–174; that stretch reads MVLRSHPFPR…PAGRSGALTE (174 aa). Over residues 49–58 the composition is skewed to gly residues; the sequence is IGTGTGGLVE. Polar residues predominate over residues 64-74; the sequence is QPRSSETNGSP. Pro residues predominate over residues 104–115; sequence PAQPPAQRPPGP. Low complexity predominate over residues 116–126; it reads AASSSARRSQP. Kelch repeat units lie at residues 306-354, 355-405, 406-448, 451-493, and 495-538; these read EEPP…TMHN, YLFL…ALDG, LLYA…AVAC, DIYV…ALGG, and LYRF…TTLG.

The chain is Kelch domain-containing protein 7B (KLHDC7B) from Homo sapiens (Human).